A 549-amino-acid polypeptide reads, in one-letter code: Hydroxylamine reductase (549 aa).

Residues cysteine 5, cysteine 8, cysteine 17, and cysteine 23 each coordinate [4Fe-4S] cluster. Hybrid [4Fe-2O-2S] cluster-binding residues include histidine 244, glutamate 268, cysteine 312, cysteine 403, cysteine 431, cysteine 456, glutamate 491, and lysine 493. The residue at position 403 (cysteine 403) is a Cysteine persulfide.

Belongs to the HCP family. It depends on [4Fe-4S] cluster as a cofactor. The cofactor is hybrid [4Fe-2O-2S] cluster.

The protein resides in the cytoplasm. The enzyme catalyses A + NH4(+) + H2O = hydroxylamine + AH2 + H(+). Functionally, catalyzes the reduction of hydroxylamine to form NH(3) and H(2)O. The chain is Hydroxylamine reductase from Caldanaerobacter subterraneus subsp. tengcongensis (strain DSM 15242 / JCM 11007 / NBRC 100824 / MB4) (Thermoanaerobacter tengcongensis).